The sequence spans 525 residues: Serine/threonine protein phosphatase 2A 55 kDa regulatory subunit B beta isoform (525 aa).

The segment at 1–31 (MDPFSKSPDDDDLRPEAEAARRPQPQPQPRE) is disordered. 2 WD repeats span residues 48–87 (QEVD…DSAS) and 124–165 (EIEE…VKRI). The tract at residues 169–191 (NLNTSQSSGNGTTSSSSSSSSRA) is disordered. Over residues 171–189 (NTSQSSGNGTTSSSSSSSS) the composition is skewed to low complexity. WD repeat units lie at residues 244–282 (AHDY…QSFN), 293–333 (DLTE…LCDN), 352–390 (EIIA…GPVA), and 495–525 (DLST…MYYA).

The protein belongs to the phosphatase 2A regulatory subunit B family. In terms of assembly, PP2A consists of a common heteromeric enzyme, composed of a catalytic subunit (subunits C), a constant regulatory subunit (subunit A), and a variety of regulatory subunits such as subunits B (the R2/B/PR55/B55, R3/B''/PR72/PR130/PR59 and R5/B'/B56 families).

Functionally, the B regulatory subunit may modulate substrate selectivity and catalytic activity, and may also direct the localization of the catalytic enzyme to a particular subcellular compartment. This Oryza sativa subsp. indica (Rice) protein is Serine/threonine protein phosphatase 2A 55 kDa regulatory subunit B beta isoform.